We begin with the raw amino-acid sequence, 150 residues long: Geranyl diphosphate phosphohydrolase (150 aa).

Residues 14 to 147 enclose the Nudix hydrolase domain; sequence SIKVAVVVCL…DNVVQDGFNP (134 aa). The Nudix box motif lies at 48–69; that stretch reads GHLEFGESFEECAARELKEETD. Positions 63 and 67 each coordinate Mg(2+).

Belongs to the Nudix hydrolase family. Expressed in petals. Little or no expression in stamens, sepals or young leaves.

The protein localises to the cytoplasm. It carries out the reaction (2E)-geranyl diphosphate + H2O = (2E)-geranyl phosphate + phosphate + H(+). Involved in a cytosolic pathway for the biosynthesis of free monoterpene alcohols that contribute to fragrance. Lacks terpene synthase activity, but has a diphosphohydrolase activity with geranyl diphosphate and farnesyl diphosphate as substrates. No activity with 8-oxo-dGTP and dGTP and unable to dephosphorylate geranyl phosphate to geraniol. The polypeptide is Geranyl diphosphate phosphohydrolase (Rosa hybrid cultivar).